Reading from the N-terminus, the 698-residue chain is Probable microcin-H47 secretion/processing ATP-binding protein MchF (698 aa).

Positions 26–145 constitute a Peptidase C39 domain; that stretch reads QTETAECGLA…RYFTGIALEV (120 aa). Cys32 is a catalytic residue. 5 helical membrane passes run 33 to 53, 90 to 110, 289 to 311, 315 to 337, and 397 to 417; these read GLAC…LISL, LGAL…VVLV, TCVV…MLLY, LTWI…YGYY, and LLFG…ILWL. Residues 176–458 form the ABC transmembrane type-1 domain; it reads LAKIFCLSVV…LTSFLLQLRI (283 aa). Residues 492-698 form the ABC transporter domain; sequence LETTDLSYRY…LRTVDRIISI (207 aa). Position 526–533 (526–533) interacts with ATP; the sequence is GASGAGKT.

It belongs to the ABC transporter superfamily.

The protein localises to the cell membrane. Functionally, probably involved, in conjunction with MchE, in the secretion of microcin H47. This is Probable microcin-H47 secretion/processing ATP-binding protein MchF (mchF) from Escherichia coli.